Reading from the N-terminus, the 141-residue chain is Nucleoside diphosphate kinase (141 aa).

Residues Lys11, Phe59, Arg87, Thr93, Arg104, and Asn114 each contribute to the ATP site. The active-site Pros-phosphohistidine intermediate is His117.

It belongs to the NDK family. Homotetramer. Requires Mg(2+) as cofactor.

It is found in the cytoplasm. The enzyme catalyses a 2'-deoxyribonucleoside 5'-diphosphate + ATP = a 2'-deoxyribonucleoside 5'-triphosphate + ADP. It carries out the reaction a ribonucleoside 5'-diphosphate + ATP = a ribonucleoside 5'-triphosphate + ADP. Its function is as follows. Major role in the synthesis of nucleoside triphosphates other than ATP. The ATP gamma phosphate is transferred to the NDP beta phosphate via a ping-pong mechanism, using a phosphorylated active-site intermediate. The sequence is that of Nucleoside diphosphate kinase from Actinobacillus succinogenes (strain ATCC 55618 / DSM 22257 / CCUG 43843 / 130Z).